A 410-amino-acid polypeptide reads, in one-letter code: Peptidase T (410 aa).

Histidine 79 is a Zn(2+) binding site. Aspartate 81 is a catalytic residue. Aspartate 142 is a binding site for Zn(2+). Catalysis depends on glutamate 176, which acts as the Proton acceptor. Positions 177, 199, and 381 each coordinate Zn(2+).

Belongs to the peptidase M20B family. Zn(2+) serves as cofactor.

It is found in the cytoplasm. The enzyme catalyses Release of the N-terminal residue from a tripeptide.. Cleaves the N-terminal amino acid of tripeptides. The chain is Peptidase T from Listeria welshimeri serovar 6b (strain ATCC 35897 / DSM 20650 / CCUG 15529 / CIP 8149 / NCTC 11857 / SLCC 5334 / V8).